The following is a 343-amino-acid chain: Phosphatidylglycerol--prolipoprotein diacylglyceryl transferase 1 (343 aa).

The next 4 membrane-spanning stretches (helical) occupy residues V19–G39, A54–I74, I93–I113, and G119–I139. R141 is a binding site for a 1,2-diacyl-sn-glycero-3-phospho-(1'-sn-glycerol). A run of 3 helical transmembrane segments spans residues H176–A196, L202–Y224, and L238–A258. Residues E269–G343 are disordered. The segment covering A283–A293 has biased composition (basic and acidic residues). Positions A314 to A324 are enriched in acidic residues.

Belongs to the Lgt family.

It is found in the cell membrane. The catalysed reaction is L-cysteinyl-[prolipoprotein] + a 1,2-diacyl-sn-glycero-3-phospho-(1'-sn-glycerol) = an S-1,2-diacyl-sn-glyceryl-L-cysteinyl-[prolipoprotein] + sn-glycerol 1-phosphate + H(+). It participates in protein modification; lipoprotein biosynthesis (diacylglyceryl transfer). Catalyzes the transfer of the diacylglyceryl group from phosphatidylglycerol to the sulfhydryl group of the N-terminal cysteine of a prolipoprotein, the first step in the formation of mature lipoproteins. This is Phosphatidylglycerol--prolipoprotein diacylglyceryl transferase 1 from Streptomyces coelicolor (strain ATCC BAA-471 / A3(2) / M145).